The chain runs to 193 residues: 3-isopropylmalate dehydratase small subunit (193 aa).

This sequence belongs to the LeuD family. LeuD type 1 subfamily. Heterodimer of LeuC and LeuD.

It catalyses the reaction (2R,3S)-3-isopropylmalate = (2S)-2-isopropylmalate. The protein operates within amino-acid biosynthesis; L-leucine biosynthesis; L-leucine from 3-methyl-2-oxobutanoate: step 2/4. Functionally, catalyzes the isomerization between 2-isopropylmalate and 3-isopropylmalate, via the formation of 2-isopropylmaleate. This Bacillus cereus (strain 03BB102) protein is 3-isopropylmalate dehydratase small subunit.